We begin with the raw amino-acid sequence, 311 residues long: Malate dehydrogenase (311 aa).

NAD(+) contacts are provided by residues 7 to 13 (GAAGGIG) and aspartate 34. Residues arginine 81 and arginine 87 each coordinate substrate. NAD(+) is bound by residues asparagine 94 and 117–119 (ITN). The substrate site is built by asparagine 119 and arginine 153. The active-site Proton acceptor is histidine 177. Methionine 227 lines the NAD(+) pocket.

Belongs to the LDH/MDH superfamily. MDH type 1 family. As to quaternary structure, homodimer.

It catalyses the reaction (S)-malate + NAD(+) = oxaloacetate + NADH + H(+). Its function is as follows. Catalyzes the reversible oxidation of malate to oxaloacetate. This Shewanella sediminis (strain HAW-EB3) protein is Malate dehydrogenase.